The primary structure comprises 365 residues: IgG receptor FcRn large subunit p51 (365 aa).

A signal peptide spans 1 to 21; that stretch reads MGMPLPWALSLLLVLLPQTWG. Residues 22–110 form an alpha-1 region; the sequence is SETRPPLMYH…KTLEKILNGT (89 aa). The Extracellular segment spans residues 22–297; that stretch reads SETRPPLMYH…VDLDSSARSS (276 aa). Asparagine 108, asparagine 125, asparagine 149, and asparagine 246 each carry an N-linked (GlcNAc...) asparagine glycan. Residues 111–200 form an alpha-2 region; sequence YTLQGLLGCE…ERGRRNLEWK (90 aa). 2 disulfide bridges follow: cysteine 119/cysteine 182 and cysteine 221/cysteine 275. The interval 201 to 290 is alpha-3; sequence EPPSMRLKAR…GLAQPLTVDL (90 aa). In terms of domain architecture, Ig-like C1-type spans 202 to 289; the sequence is PPSMRLKARP…EGLAQPLTVD (88 aa). A connecting peptide region spans residues 291–297; the sequence is DSSARSS. The helical transmembrane segment at 298 to 321 threads the bilayer; that stretch reads VPVVGIVLGLLLVVVAIAGGVLLW. The Cytoplasmic portion of the chain corresponds to 322–365; that stretch reads GRMRSGLPAPWLSLSGDDSGDLLPGGNLPPEAEPQGANAFPATS. Serine 334 carries the post-translational modification Phosphoserine. Residues 343–365 form a disordered region; the sequence is LLPGGNLPPEAEPQGANAFPATS.

The protein belongs to the immunoglobulin superfamily. As to quaternary structure, fcRn complex consists of two subunits: p51, and p14 which is equivalent to beta-2-microglobulin. It forms an MHC class I-like heterodimer. Interacts with albumin/ALB; this interaction regulates ALB homeostasis. As to expression, intestinal epithelium of suckling rodents. Expressed in neonatal intestine and fetal yolk sac.

The protein resides in the cell membrane. It localises to the endosome membrane. Its function is as follows. Cell surface receptor that transfers passive humoral immunity from the mother to the newborn. Binds to the Fc region of monomeric immunoglobulin gamma and mediates its selective uptake from milk. IgG in the milk is bound at the apical surface of the intestinal epithelium. The resultant FcRn-IgG complexes are transcytosed across the intestinal epithelium and IgG is released from FcRn into blood or tissue fluids. Throughout life, contributes to effective humoral immunity by recycling IgG and extending its half-life in the circulation. Mechanistically, monomeric IgG binding to FcRn in acidic endosomes of endothelial and hematopoietic cells recycles IgG to the cell surface where it is released into the circulation. In addition of IgG, regulates homeostasis of the other most abundant circulating protein albumin/ALB. In Mus musculus (Mouse), this protein is IgG receptor FcRn large subunit p51 (Fcgrt).